A 48-amino-acid polypeptide reads, in one-letter code: uncharacterized protein (48 aa).

Residues isoleucine 20–histidine 37 form a helical membrane-spanning segment.

The protein resides in the membrane. This is an uncharacterized protein from Saccharomyces cerevisiae (strain ATCC 204508 / S288c) (Baker's yeast).